We begin with the raw amino-acid sequence, 383 residues long: 3-dehydroquinate synthase (383 aa).

NAD(+) is bound by residues E81–K86, G115–D119, T139–S140, K152, and K161. 3 residues coordinate Zn(2+): E194, H256, and H274.

The protein belongs to the sugar phosphate cyclases superfamily. Dehydroquinate synthase family. It depends on Co(2+) as a cofactor. Requires Zn(2+) as cofactor. NAD(+) serves as cofactor.

Its subcellular location is the cytoplasm. The enzyme catalyses 7-phospho-2-dehydro-3-deoxy-D-arabino-heptonate = 3-dehydroquinate + phosphate. It participates in metabolic intermediate biosynthesis; chorismate biosynthesis; chorismate from D-erythrose 4-phosphate and phosphoenolpyruvate: step 2/7. Catalyzes the conversion of 3-deoxy-D-arabino-heptulosonate 7-phosphate (DAHP) to dehydroquinate (DHQ). In Nitrobacter hamburgensis (strain DSM 10229 / NCIMB 13809 / X14), this protein is 3-dehydroquinate synthase.